A 461-amino-acid polypeptide reads, in one-letter code: ATP synthase subunit beta 2 (461 aa).

151–158 (GGAGVGKT) is an ATP binding site.

This sequence belongs to the ATPase alpha/beta chains family. In terms of assembly, F-type ATPases have 2 components, CF(1) - the catalytic core - and CF(0) - the membrane proton channel. CF(1) has five subunits: alpha(3), beta(3), gamma(1), delta(1), epsilon(1). CF(0) has three main subunits: a(1), b(2) and c(9-12). The alpha and beta chains form an alternating ring which encloses part of the gamma chain. CF(1) is attached to CF(0) by a central stalk formed by the gamma and epsilon chains, while a peripheral stalk is formed by the delta and b chains.

The protein resides in the cell inner membrane. It catalyses the reaction ATP + H2O + 4 H(+)(in) = ADP + phosphate + 5 H(+)(out). Functionally, produces ATP from ADP in the presence of a proton gradient across the membrane. The catalytic sites are hosted primarily by the beta subunits. The chain is ATP synthase subunit beta 2 from Vibrio campbellii (strain ATCC BAA-1116).